We begin with the raw amino-acid sequence, 84 residues long: Translational regulator CsrA (84 aa).

It belongs to the CsrA/RsmA family. Homodimer; the beta-strands of each monomer intercalate to form a hydrophobic core, while the alpha-helices form wings that extend away from the core.

It is found in the cytoplasm. Its function is as follows. A translational regulator that binds mRNA to regulate translation initiation and/or mRNA stability. Usually binds in the 5'-UTR at or near the Shine-Dalgarno sequence preventing ribosome-binding, thus repressing translation. Its main target seems to be the major flagellin gene, while its function is anatagonized by FliW. This Leptospira borgpetersenii serovar Hardjo-bovis (strain JB197) protein is Translational regulator CsrA.